The following is a 293-amino-acid chain: Protein YIF1A (293 aa).

A disordered region spans residues 1 to 33 (MAYHSGYGAHGSKHRARAAPDPPPLFDDTSGGY). An N-acetylalanine modification is found at A2. Residues 2 to 138 (AYHSGYGAHG…PPRQDLNAPD (137 aa)) are Cytoplasmic-facing. S12 carries the phosphoserine modification. A helical membrane pass occupies residues 139–159 (LYIPTMAFITYVLLAGMALGI). The Lumenal portion of the chain corresponds to 160–174 (QKRFSPEVLGLCAST). The chain crosses the membrane as a helical span at residues 175 to 195 (ALVWVVMEVLALLLGLYLATV). Over 196–203 (RSDLSTFH) the chain is Cytoplasmic. A helical transmembrane segment spans residues 204-226 (LLAYSGYKYVGMILSVLTGLLFG). Residues 227–229 (SDG) are Lumenal-facing. Residues 230–249 (YYVALAWTSSALMYFIVRSL) form a helical membrane-spanning segment. Topologically, residues 250–271 (RTAALGPDSMGGPVPRQRLQLY) are cytoplasmic. Residues 272–292 (LTLGAAAFQPLIIYWLTFHLV) form a helical membrane-spanning segment.

Belongs to the YIF1 family. Interacts with YIPF5.

It localises to the endoplasmic reticulum membrane. The protein localises to the golgi apparatus membrane. It is found in the endoplasmic reticulum-Golgi intermediate compartment membrane. Its function is as follows. Possible role in transport between endoplasmic reticulum and Golgi. The chain is Protein YIF1A (YIF1A) from Homo sapiens (Human).